We begin with the raw amino-acid sequence, 300 residues long: QVTGNGHVQSLAFPNSYPRNLLLTWRLHSQEKTRIQLAFDHQFGLEEAENDICRYDFVEVEDISETSTVIRGRWCGHKEVPPRITSRTNQIKITFKSDDYFVAKPGFKIYYSFVEDFQPAAASETNWESVTSSISGVSYHNPSVTDPTLTADALDKTIAEFDTVEDLLKHFNPESWQEDLENLYLDTPHYRGRSYHDRKSKVDLDRLNDDAKRYSCTPRNYSVNLREELKLTNVVFFPRCLLVQRCGGNCGCGTVNWKSCTCSSGKTVKKYHEVLKFEPGHFKRRNRAKNMALVDIQLDH.

The 114-residue stretch at 1 to 114 folds into the CUB domain; the sequence is QVTGNGHVQS…PGFKIYYSFV (114 aa). C53 and C75 are disulfide-bonded. An N-linked (GlcNAc...) asparagine glycan is attached at N220.

The protein belongs to the PDGF/VEGF growth factor family. Homodimer; disulfide-linked. Interacts with PDGFRB homodimers, and with heterodimers formed by PDGFRA and PDGFRB. Activated by proteolytic cleavage. Proteolytic removal of the N-terminal CUB domain releasing the core domain is necessary for unmasking the receptor-binding epitopes of the core domain. Cleavage after Arg-191 or Arg-193 by urokinase plasminogen activator gives rise to the active form.

It is found in the secreted. Growth factor that plays an essential role in the regulation of embryonic development, cell proliferation, cell migration, survival and chemotaxis. Potent mitogen for cells of mesenchymal origin. Plays an important role in wound healing. Induces macrophage recruitment, increased interstitial pressure, and blood vessel maturation during angiogenesis. Can initiate events that lead to a mesangial proliferative glomerulonephritis, including influx of monocytes and macrophages and production of extracellular matrix. This Oryctolagus cuniculus (Rabbit) protein is Platelet-derived growth factor D (PDGFD).